The following is a 507-amino-acid chain: ATP synthase subunit alpha (507 aa).

An ATP-binding site is contributed by 169 to 176 (GDRQTGKT).

The protein belongs to the ATPase alpha/beta chains family. As to quaternary structure, F-type ATPases have 2 components, CF(1) - the catalytic core - and CF(0) - the membrane proton channel. CF(1) has five subunits: alpha(3), beta(3), gamma(1), delta(1), epsilon(1). CF(0) has three main subunits: a(1), b(2) and c(9-12). The alpha and beta chains form an alternating ring which encloses part of the gamma chain. CF(1) is attached to CF(0) by a central stalk formed by the gamma and epsilon chains, while a peripheral stalk is formed by the delta and b chains.

It localises to the cell inner membrane. It carries out the reaction ATP + H2O + 4 H(+)(in) = ADP + phosphate + 5 H(+)(out). In terms of biological role, produces ATP from ADP in the presence of a proton gradient across the membrane. The alpha chain is a regulatory subunit. In Magnetococcus marinus (strain ATCC BAA-1437 / JCM 17883 / MC-1), this protein is ATP synthase subunit alpha.